The chain runs to 565 residues: NAD-dependent malic enzyme (565 aa).

Tyr104 acts as the Proton donor in catalysis. Position 157 (Arg157) interacts with NAD(+). Lys175 serves as the catalytic Proton acceptor. Glu246, Asp247, and Asp270 together coordinate a divalent metal cation. NAD(+) contacts are provided by Asp270 and Asn418.

This sequence belongs to the malic enzymes family. In terms of assembly, homotetramer. Mg(2+) serves as cofactor. Requires Mn(2+) as cofactor.

It carries out the reaction (S)-malate + NAD(+) = pyruvate + CO2 + NADH. It catalyses the reaction oxaloacetate + H(+) = pyruvate + CO2. The protein is NAD-dependent malic enzyme of Escherichia coli (strain SMS-3-5 / SECEC).